Here is a 121-residue protein sequence, read N- to C-terminus: UPF0102 protein Hhal_2103 (121 aa).

Residues 1–20 are disordered; it reads MMAPQTTRNDPRQRGQEAEE. Positions 9 to 20 are enriched in basic and acidic residues; the sequence is NDPRQRGQEAEE.

The protein belongs to the UPF0102 family.

This chain is UPF0102 protein Hhal_2103, found in Halorhodospira halophila (strain DSM 244 / SL1) (Ectothiorhodospira halophila (strain DSM 244 / SL1)).